A 409-amino-acid chain; its full sequence is uncharacterized protein (409 aa).

A run of 10 helical transmembrane segments spans residues 18–38 (ALSA…ADVV), 47–67 (GPLL…TGVG), 100–120 (VVTV…ALVI), 159–179 (VGAM…GNAY), 180–200 (APAL…LLWL), 232–252 (FWLY…FGLL), 260–280 (GVLA…ADAL), 302–322 (ILSI…VVIG), 355–375 (GVFA…IGWL), and 380–400 (IGTL…MMFA).

It localises to the cell membrane. This is an uncharacterized protein from Mycobacterium tuberculosis (strain CDC 1551 / Oshkosh).